A 101-amino-acid chain; its full sequence is Interleukin-8 (101 aa).

An N-terminal signal peptide occupies residues 1–22 (MTSKLVVALLAAFMLSAALCEA). A Citrulline modification is found at Arg27. Cystine bridges form between Cys34–Cys61 and Cys36–Cys77.

The protein belongs to the intercrine alpha (chemokine CxC) family. In terms of assembly, homodimer. Interacts with TNFAIP6 (via Link domain); this interaction interferes with chemokine binding to glycosaminoglycans. In terms of processing, citrullination at Arg-27 prevents proteolysis, and dampens tissue inflammation, it also enhances leukocytosis, possibly through impaired chemokine clearance from the blood circulation.

The protein localises to the secreted. In terms of biological role, chemotactic factor that mediates inflammatory response by attracting neutrophils, basophils, and T-cells to clear pathogens and protect the host from infection. Also plays an important role in neutrophil activation. Released in response to an inflammatory stimulus, exerts its effect by binding to the G-protein-coupled receptors CXCR1 and CXCR2, primarily found in neutrophils, monocytes and endothelial cells. G-protein heterotrimer (alpha, beta, gamma subunits) constitutively binds to CXCR1/CXCR2 receptor and activation by IL8 leads to beta and gamma subunits release from Galpha (GNAI2 in neutrophils) and activation of several downstream signaling pathways including PI3K and MAPK pathways. The polypeptide is Interleukin-8 (CXCL8) (Felis catus (Cat)).